The following is a 113-amino-acid chain: uncharacterized protein (113 aa).

The chain crosses the membrane as a helical span at residues 7-29 (FFILIVLLFTVFSLKEFIPNTFC).

The protein resides in the membrane. This is an uncharacterized protein from Aquifex aeolicus (strain VF5).